The sequence spans 740 residues: DNA polymerase iota (740 aa).

The disordered stretch occupies residues 1-21 (MEKLGVEPEEEGGGDDDEEDA). Acidic residues predominate over residues 7 to 21 (EPEEEGGGDDDEEDA). In terms of domain architecture, UmuC spans 55–268 (IVHVDLDCFY…NHIKEIPGIG (214 aa)). Positions 59 and 60 each coordinate Mg(2+). The Mn(2+) site is built by aspartate 59 and leucine 60. Residues tyrosine 64 and arginine 96 each coordinate a 2'-deoxyribonucleoside 5'-triphosphate. Residue aspartate 151 participates in Mg(2+) binding. Residue aspartate 151 participates in Mn(2+) binding. The active-site Proton acceptor is glutamate 152. DNA-binding stretches follow at residues 249 to 314 (ESCQ…FGED) and 325 to 439 (QSFS…CNLK). Residues 527-544 (VDQEVFKQLPVDIQEEIL) carry the Ubiquitin-binding 1 (UBM1) motif. 2 disordered regions span residues 581-615 (PINP…SSYM) and 671-704 (NHTT…KITF). The span at 605 to 615 (SGFNSSSSSYM) shows a compositional bias: low complexity. Positions 672–702 (HTTDSHKQTVATDSHEGLTENREPDSVDEKI) are enriched in basic and acidic residues. The Ubiquitin-binding 2 (UBM2) motif lies at 708-725 (IDPQVFYELPEAVQKELL).

It belongs to the DNA polymerase type-Y family. As to quaternary structure, interacts with POLH. Interacts with REV1. Interacts with ubiquitin. Mg(2+) serves as cofactor. Requires Mn(2+) as cofactor. Monoubiquitinated. Protein monoubiquitination prevents POLI binding to ubiquitin via the ubiquitin-binding motif 1 and ubiquitin-binding motif 2. As to expression, ubiquitous. Highly expressed in testis.

The protein resides in the nucleus. The catalysed reaction is DNA(n) + a 2'-deoxyribonucleoside 5'-triphosphate = DNA(n+1) + diphosphate. Error-prone DNA polymerase specifically involved in DNA repair. Plays an important role in translesion synthesis, where the normal high-fidelity DNA polymerases cannot proceed and DNA synthesis stalls. Favors Hoogsteen base-pairing in the active site. Inserts the correct base with high-fidelity opposite an adenosine template. Exhibits low fidelity and efficiency opposite a thymidine template, where it will preferentially insert guanosine. May play a role in hypermutation of immunoglobulin genes. Forms a Schiff base with 5'-deoxyribose phosphate at abasic sites, but may not have lyase activity. The protein is DNA polymerase iota (POLI) of Homo sapiens (Human).